Consider the following 89-residue polypeptide: MANHYSALKRARQTETRTARNRANTSRMRTQLRALRTAIAGGDAAQVKTEFSGTVSLLDKAVQKGVLHKNTASRYKARLSARVKAKTSK.

The disordered stretch occupies residues 1 to 28 (MANHYSALKRARQTETRTARNRANTSRM).

It belongs to the bacterial ribosomal protein bS20 family.

Functionally, binds directly to 16S ribosomal RNA. The polypeptide is Small ribosomal subunit protein bS20 (Koribacter versatilis (strain Ellin345)).